Here is a 739-residue protein sequence, read N- to C-terminus: Oxysterol-binding protein-related protein 9 (739 aa).

Residues 2 to 99 (ASIMEGPLSK…WIHALEETIL (98 aa)) enclose the PH domain. Disordered regions lie at residues 220-292 (TQAS…SYSS) and 306-371 (SSTS…ESVE). Positions 249-259 (NLGSRQSPTPI) are enriched in polar residues. The segment covering 260–276 (STGSGQSAPSSSLTSPS) has biased composition (low complexity). Polar residues-rich tracts occupy residues 277-292 (HVNL…SYSS), 306-330 (SSTS…STGA), and 338-352 (TESL…TNEA).

This sequence belongs to the OSBP family.

It catalyses the reaction a 1,2-diacyl-sn-glycero-3-phospho-(1D-myo-inositol 4-phosphate)(out) + a 1,2-diacyl-sn-glycero-3-phospho-L-serine(in) = a 1,2-diacyl-sn-glycero-3-phospho-(1D-myo-inositol 4-phosphate)(in) + a 1,2-diacyl-sn-glycero-3-phospho-L-serine(out). Functionally, interacts with OSBPL11 to function as lipid transfer proteins. Together they form a heterodimer that localizes at the ER-trans-Golgi membrane contact sites, and exchanges phosphatidylserine (1,2-diacyl-sn-glycero-3-phospho-L-serine, PS) for phosphatidylinositol-4-phosphate (1,2-diacyl-sn-glycero-3-phospho-(1D-myo-inositol 4-phosphate), PI(4)P) between the two organelles, a step that is critical for sphingomyelin synthesis in the Golgi complex. The protein is Oxysterol-binding protein-related protein 9 (osbpl9) of Xenopus tropicalis (Western clawed frog).